The sequence spans 1076 residues: Envelopment polyprotein (1076 aa).

Positions 1 to 18 (MIVPIVLFLTLCPSELSA) are cleaved as a signal peptide. Topologically, residues 19–455 (WGSPGDPIVC…NPQCYPVKKW (437 aa)) are lumenal. 9 disulfide bridges follow: cysteine 28–cysteine 51, cysteine 145–cysteine 158, cysteine 182–cysteine 329, cysteine 208–cysteine 218, cysteine 260–cysteine 307, cysteine 289–cysteine 294, cysteine 351–cysteine 354, cysteine 358–cysteine 426, and cysteine 378–cysteine 383. The helical transmembrane segment at 456 to 476 (LFLVVVIMCCYCALMLLTNIL) threads the bilayer. Residues 477–523 (RAIGVWGTWVFAPIKLALALGLRLAKLSKKGLVAVVTRGQMIVNDEL) are golgi retention signal. Residues 477-539 (RAIGVWGTWV…RGEQNEGRQG (63 aa)) lie on the Cytoplasmic side of the membrane. An internal signal sequence for glycoprotein C region spans residues 544 to 566 (GPIRHWLYSPALILILTTSICSG). 10 disulfides stabilise this stretch: cysteine 567–cysteine 608, cysteine 580–cysteine 590, cysteine 633–cysteine 729, cysteine 648–cysteine 845, cysteine 654–cysteine 702, cysteine 660–cysteine 709, cysteine 664–cysteine 691, cysteine 695–cysteine 700, cysteine 782–cysteine 797, and cysteine 813–cysteine 827. Topologically, residues 567 to 1040 (CDELVHAESK…ALFGDGITRW (474 aa)) are lumenal. Positions 654 to 660 (CRWAGDC) are fusion loop. The interval 695–709 (CGGAACGCFNAAPSC) is fusion loop. N-linked (GlcNAc...) asparagine; by host glycans are attached at residues asparagine 857 and asparagine 918. 2 cysteine pairs are disulfide-bonded: cysteine 912-cysteine 982 and cysteine 922-cysteine 925. N-linked (GlcNAc...) asparagine; by host glycosylation is present at asparagine 940. The chain crosses the membrane as a helical span at residues 1041–1061 (ILGIIGVLLACVMLFVVVVAI). Topologically, residues 1062–1076 (TRRLIKGLTQRAKVA) are cytoplasmic.

Belongs to the phlebovirus envelope glycoprotein family. In terms of assembly, heterodimer with glycoprotein C. Heterodimer with glycoprotein N. Homotrimer (postfusion). Post-translationally, specific enzymatic cleavages in vivo yield mature proteins Glycoprotein C, and Glycoprotein N. Glycosylated. In terms of processing, palmitoylated.

The protein resides in the virion membrane. It localises to the host Golgi apparatus membrane. The protein localises to the host endoplasmic reticulum membrane. In terms of biological role, structural component of the virion that interacts with glycoprotein C. It shields the hydrophobic fusion loops of the glycoprotein C, preventing premature fusion. The glycoprotein protrusions are arranged on an icosahedral lattice, with T=12 triangulation. They are able to attach the virion to the host cell receptor CD209/DC-SIGN and to promote fusion of membranes with the late endosome after endocytosis of the virion. Plays a role in the packaging of ribonucleoproteins during virus assembly. Its function is as follows. Structural component of the virion that interacts with glycoprotein N. Acts as a class II fusion protein that is activated upon acidification and subsequent repositioning of the glycoprotein N. The glycoprotein protrusions are arranged on an icosahedral lattice, with T=12 triangulation. They are able to attach the virion to the host cell receptor CD209/DC-SIGN and to promote fusion of membranes with the late endosome after endocytosis of the virion. This Alces americanus (American moose) protein is Envelopment polyprotein (GP).